A 259-amino-acid polypeptide reads, in one-letter code: NADPH-dependent reductase BacG (259 aa).

NADP(+) contacts are provided by residues Ser12–Ile15, Ser34–Asn36, Asp62–Met63, Ile90, Lys113, and Gly185–Arg191.

This sequence belongs to the short-chain dehydrogenases/reductases (SDR) family. Homodimer.

It is found in the cytoplasm. The protein operates within antibiotic biosynthesis; bacilysin biosynthesis. Functionally, along with the bacABCDEF operon, BacG is involved in the biosynthesis of the nonribosomally synthesized dipeptide antibiotic bacilysin, composed of L-alanine and L-anticapsin. Bacilysin is an irreversible inactivator of the glutaminase domain of glucosamine synthetase. BacG catalyzes the stereoselective reduction of exocyclic-delta(3),delta(5)-dihydro-hydroxyphenylpyruvate (ex-H2HPP), adding a pro-S hydride equivalent to C4 position to yield tetrahydro-hydroxyphenylpyruvate (H4HPP). Although the 3Z,7R-ex-H2HPP isomer is kinetically disfavored by BacB and produced in a smaller quantity than 3E,7R-ex-H2HPP, it is the preferred substrate for the conjugate reduction reaction of BacG. The polypeptide is NADPH-dependent reductase BacG (Bacillus subtilis (strain 168)).